A 114-amino-acid chain; its full sequence is Cell cycle protein GpsB (114 aa).

Residues 42-77 are a coiled coil; that stretch reads YQKMADMNNEVVKLSEENHKLKKELEELRLRVATSR. Positions 74-99 are disordered; the sequence is ATSRPQDNKSFSSNNTTTNTSSNNVD. Low complexity predominate over residues 85 to 97; that stretch reads SSNNTTTNTSSNN.

This sequence belongs to the GpsB family. As to quaternary structure, forms polymers through the coiled coil domains. Interacts with PBP1, MreC and EzrA.

It localises to the cytoplasm. Its function is as follows. Divisome component that associates with the complex late in its assembly, after the Z-ring is formed, and is dependent on DivIC and PBP2B for its recruitment to the divisome. Together with EzrA, is a key component of the system that regulates PBP1 localization during cell cycle progression. Its main role could be the removal of PBP1 from the cell pole after pole maturation is completed. Also contributes to the recruitment of PBP1 to the division complex. Not essential for septum formation. This is Cell cycle protein GpsB from Staphylococcus aureus (strain Mu3 / ATCC 700698).